Reading from the N-terminus, the 164-residue chain is Large ribosomal subunit protein eL21x/eL21w (164 aa).

This sequence belongs to the eukaryotic ribosomal protein eL21 family.

This Arabidopsis thaliana (Mouse-ear cress) protein is Large ribosomal subunit protein eL21x/eL21w (RPL21E).